The sequence spans 176 residues: Tubulin polymerization-promoting protein family member 3 (176 aa).

Residues 132-151 (TGSHKERFDQTGKGKGKSGR) form a disordered region. Over residues 134-151 (SHKERFDQTGKGKGKSGR) the composition is skewed to basic and acidic residues.

It belongs to the TPPP family.

It is found in the cytoplasm. It localises to the cytoskeleton. In terms of biological role, regulator of microtubule dynamic that has microtubule bundling activity. The protein is Tubulin polymerization-promoting protein family member 3 (tppp3) of Xenopus laevis (African clawed frog).